A 54-amino-acid chain; its full sequence is Large ribosomal subunit protein bL33 (54 aa).

It belongs to the bacterial ribosomal protein bL33 family.

The chain is Large ribosomal subunit protein bL33 from Caldicellulosiruptor saccharolyticus (strain ATCC 43494 / DSM 8903 / Tp8T 6331).